Here is a 153-residue protein sequence, read N- to C-terminus: Small heat shock protein HspB (153 aa).

One can recognise a sHSP domain in the interval 30–140 (AGTEDNYPPC…KPRRISISGS (111 aa)).

Belongs to the small heat shock protein (HSP20) family.

This is Small heat shock protein HspB (hspB) from Bradyrhizobium diazoefficiens (strain JCM 10833 / BCRC 13528 / IAM 13628 / NBRC 14792 / USDA 110).